The chain runs to 1625 residues: Nonribosomal peptide synthetase aclP (1625 aa).

Residues 47–123 (TTMNPSSQLL…ALFTDLLSSE (77 aa)) enclose the Carrier 1 domain. Residue Ser84 is modified to O-(pantetheine 4'-phosphoryl)serine. The segment at 127–157 (IPIPDPSDDSDDLSNPSSSTGGSPRVATPIS) is disordered. The interval 286 to 567 (ASSQSTVIWA…KYFQRALQLL (282 aa)) is condensation 1. The interval 614-997 (FESAVSRNPM…GRTDRQIKLR (384 aa)) is adenylation. The Carrier 2 domain maps to 1096–1171 (SPMEKLVGDA…HLAAAIDSGL (76 aa)). The residue at position 1131 (Ser1131) is an O-(pantetheine 4'-phosphoryl)serine. The tract at residues 1195 to 1585 (EWWHKYQINE…LQARIPLALS (391 aa)) is condensation 2.

The protein belongs to the NRP synthetase family.

Its pathway is mycotoxin biosynthesis. Functionally, nonribosomal peptide synthetase; part of the gene cluster that mediates the biosynthesis of aspirochlorine (or antibiotic A30641), an unusual halogenated spiro compound with distinctive antifungal properties due to selective inhibition of protein biosynthesis, and which is also active against bacteria, viruses, and murine tumor cells. The non-ribosomal peptide synthetase (NRPS) aclP is responsible the formation of the diketopiperazine (DKP) core from the condensation of 2 phenylalanine residues. One Phe residue is tailored into chlorotyrosine by hydroxylation and chlorination, whereas the second Phe undergoes an unprecedented C-C bond cleavage to be converted into glycine. After formation of the DKP, sulfur is incorporated into the DKP by conjugation with glutathione by aclG, followed by its stepwise degradation to the thiol by aclI, aclJ and aclK, and the dithiol oxidation by aclT. In addition, oxygenases (aclB, aclC, aclL and aclO) and O-methyltransferases (aclM and aclU) act as tailoring enzymes to produce the intermediate dechloroaspirochlorine. Ultimately, chlorination of dechloroaspirochlorine by the halogenase aclH is the last step in the aspirochlorine pathway. The protein is Nonribosomal peptide synthetase aclP of Aspergillus oryzae (strain ATCC 42149 / RIB 40) (Yellow koji mold).